A 158-amino-acid polypeptide reads, in one-letter code: 2-C-methyl-D-erythritol 2,4-cyclodiphosphate synthase (158 aa).

The a divalent metal cation site is built by aspartate 9 and histidine 11. 4-CDP-2-C-methyl-D-erythritol 2-phosphate contacts are provided by residues 9-11 (DVH) and 35-36 (HS). An a divalent metal cation-binding site is contributed by histidine 43. 4-CDP-2-C-methyl-D-erythritol 2-phosphate-binding positions include 57 to 59 (DIG), 62 to 66 (FPDTD), 133 to 136 (TTTE), phenylalanine 140, and arginine 143.

The protein belongs to the IspF family. Homotrimer. A divalent metal cation serves as cofactor.

The enzyme catalyses 4-CDP-2-C-methyl-D-erythritol 2-phosphate = 2-C-methyl-D-erythritol 2,4-cyclic diphosphate + CMP. The protein operates within isoprenoid biosynthesis; isopentenyl diphosphate biosynthesis via DXP pathway; isopentenyl diphosphate from 1-deoxy-D-xylulose 5-phosphate: step 4/6. In terms of biological role, involved in the biosynthesis of isopentenyl diphosphate (IPP) and dimethylallyl diphosphate (DMAPP), two major building blocks of isoprenoid compounds. Catalyzes the conversion of 4-diphosphocytidyl-2-C-methyl-D-erythritol 2-phosphate (CDP-ME2P) to 2-C-methyl-D-erythritol 2,4-cyclodiphosphate (ME-CPP) with a corresponding release of cytidine 5-monophosphate (CMP). The chain is 2-C-methyl-D-erythritol 2,4-cyclodiphosphate synthase from Actinobacillus pleuropneumoniae serotype 7 (strain AP76).